Consider the following 102-residue polypeptide: Carboxysome shell protein CcmK2 (102 aa).

The BMC domain occupies 4 to 90; it reads AVGMIETLGF…PHENLEYVLP (87 aa).

The protein belongs to the bacterial microcompartments protein family. CcmK subfamily. As to quaternary structure, homohexamer. Interacts with CcmO in the carboxysome. Interacts with CcmN.

Its subcellular location is the carboxysome. Its function is as follows. One of the shell proteins of the carboxysome, a polyhedral inclusion where RuBisCO (ribulose bisphosphate carboxylase, rbcL-rbcS) is sequestered. Assembles into hexamers which make sheets that form the facets of the polyhedral carboxysome. The hexamer central pore probably regulates metabolite flux. The major shell protein of the carboxysome, a polyhedral inclusion where RuBisCO (ribulose bisphosphate carboxylase, rbcL-rbcS) is sequestered. Hexamers make sheets that form the facets of the polyhedral carboxysome. The shell is 4.5 nm thick, as observed for CcmK hexamers. Required for recruitment of CcmO to the pre-carboxysome. In PCC 7942 there are several CcmK paralogs with presumably functional differences; replacing the central pore residues (34-37) with those of either CcmK4 from this organism (Tyr-Met-Arg-Ala) or from an alpha-type carboxysome forming cyanobacterium (CsoS1 of P.marinus strain MIT 9313, Arg-Glu-Phe-Val) allows the bacterium to make carboxysomes, but the expression level is too low to know if the carboxysome is functional for CO(2) fixation. In terms of biological role, beta-carboxysome assembly initiates when soluble RuBisCO is condensed into a liquid matrix in a pre-carboxysome by the RbcS-like domains of probably both CcmM58 and CcmM35. CcmN interacts with the N-terminus of CcmM58, and then recruits the CcmK2 major shell protein via CcmN's encapsulation peptide. Shell formation requires CcmK proteins and CcmO. CcmL caps the otherwise elongated carboxysome. Once fully encapsulated carboxysomes are formed, they migrate within the cell probably via interactions with the cytoskeleton. The sequence is that of Carboxysome shell protein CcmK2 from Synechococcus elongatus (strain ATCC 33912 / PCC 7942 / FACHB-805) (Anacystis nidulans R2).